Reading from the N-terminus, the 485-residue chain is Glutamate--tRNA ligase (485 aa).

A 'HIGH' region motif is present at residues 10-20 (PSPTGHLHIGN). The 'KMSKS' region motif lies at 253-257 (KLSKR). K256 is a binding site for ATP.

The protein belongs to the class-I aminoacyl-tRNA synthetase family. Glutamate--tRNA ligase type 1 subfamily. In terms of assembly, monomer.

It is found in the cytoplasm. The enzyme catalyses tRNA(Glu) + L-glutamate + ATP = L-glutamyl-tRNA(Glu) + AMP + diphosphate. In terms of biological role, catalyzes the attachment of glutamate to tRNA(Glu) in a two-step reaction: glutamate is first activated by ATP to form Glu-AMP and then transferred to the acceptor end of tRNA(Glu). This chain is Glutamate--tRNA ligase, found in Enterococcus faecalis (strain ATCC 700802 / V583).